We begin with the raw amino-acid sequence, 1059 residues long: Endo-1,4-beta-xylanase A (1059 aa).

A signal peptide spans 1 to 30 (MQVRKRRGLLDVSTAVLVGILAGFLGVVLA). An A-1 region spans residues 47–199 (SSLETVLALS…LDKVQVLAPK (153 aa)). Residues 200–354 (ESGPKVIYET…DDVKIVDTTS (155 aa)) are A-2. The 329-residue stretch at 364 to 692 (EKEIPALKEV…KLAYWAIVAP (329 aa)) folds into the GH10 domain. E502 (proton donor) is an active-site residue. Catalysis depends on E608, which acts as the Nucleophile. CBM-cenC domains lie at 700-870 (KESR…LEGI) and 871-1059 (MVAT…RLIK).

It belongs to the glycosyl hydrolase 10 (cellulase F) family.

It catalyses the reaction Endohydrolysis of (1-&gt;4)-beta-D-xylosidic linkages in xylans.. The polypeptide is Endo-1,4-beta-xylanase A (xynA) (Thermotoga maritima (strain ATCC 43589 / DSM 3109 / JCM 10099 / NBRC 100826 / MSB8)).